A 408-amino-acid chain; its full sequence is L,D-transpeptidase 2 (408 aa).

A signal peptide spans Met-1–Ala-34. Residue Cys-35 is the site of N-palmitoyl cysteine attachment. Residue Cys-35 is the site of S-diacylglycerol cysteine attachment. Ca(2+) is bound by residues Asp-232, Glu-235, and Gly-236. In terms of domain architecture, L,D-TPase catalytic spans Val-253–Val-378. Substrate contacts are provided by residues Tyr-318 and Ser-331–Gly-332. The Proton donor/acceptor role is filled by His-336. Catalysis depends on Cys-354, which acts as the Nucleophile. Position 356 (Asn-356) interacts with substrate.

In terms of assembly, monomer.

It localises to the cell membrane. It functions in the pathway cell wall biogenesis; peptidoglycan biosynthesis. With respect to regulation, is irreversibly inactivated by the beta-lactams carbapenems via the formation of a covalent adduct resulting from acylation of the catalytic Cys. Functionally, generates 3-&gt;3 cross-links in peptidoglycan, catalyzing the cleavage of the mDap(3)-D-Ala(4) bond of a tetrapeptide donor stem and the formation of a bond between the carbonyl of mDap(3) of the donor stem and the side chain of mDap(3) of the acceptor stem. Is specific for donor substrates containing a stem tetrapeptide since it cannot use pentapeptide stems. Is essential for virulence in a mouse model of acute infection. In Mycobacterium tuberculosis (strain CDC 1551 / Oshkosh), this protein is L,D-transpeptidase 2 (ldtB).